Reading from the N-terminus, the 440-residue chain is FAD-dependent monooxygenase afoD (440 aa).

A helical transmembrane segment spans residues 10–30 (PLSIAIIGGGIIGLMTALGLL). Positions 41, 145, and 320 each coordinate FAD. Asn352 carries an N-linked (GlcNAc...) asparagine glycan.

Belongs to the paxM FAD-dependent monooxygenase family. FAD serves as cofactor.

It is found in the membrane. Functionally, FAD-dependent monooxygenase; part of the gene cluster that mediates the biosynthesis of asperfuranone, a probable antitumor agent. The polyketide synthase afoG is responsible for producing the 3,5-dimethyloctadienone moiety from acetyl-CoA, three malonyl-CoA, and two S-adenosyl methionines (SAM). The 3,5-dimethyloctadienone moiety is then loaded onto the SAT domain of afoE and extended with four malonyl-CoA and one SAM, which leads to the formation of 2,4-dihydroxy-6-(5,7-dimethyl-2-oxo-trans-3-trans-5-nonadienyl)-3-methylbenzaldehyde (compound 2) after reductive release and aldol condensation. AfoD is the next enzyme in the biosynthesis sequence and hydroxylates the side chain at the benzylic position of compound 2. After benzylic hydroxylation, a furan ring is formed after five-member ring hemiacetal formation and water elimination. AfoF and afoC are proposed to oxidize the R-diketone proton and to reduce the unconjugated carbonyl group, respectively, to generate asperfuranone. Since no intermediates could be isolated from afoF and afoC deletants, the sequence of these two enzymes is not fully understood. Moreover, since afoC deletant still produces a small amount of asperfuranone, other endogenous oxidoreductases might catalyze the same reaction with much less efficiency. This is FAD-dependent monooxygenase afoD from Emericella nidulans (strain FGSC A4 / ATCC 38163 / CBS 112.46 / NRRL 194 / M139) (Aspergillus nidulans).